The sequence spans 155 residues: Rusticyanin (155 aa).

One can recognise a Plastocyanin-like domain in the interval 53–155 (SFEVHDKKNP…TGMFGKIIVK (103 aa)). The Cu cation site is built by His85, Cys138, His143, and Met148.

In terms of assembly, monomer. The cofactor is Cu cation.

Its subcellular location is the periplasm. Electron carrier from cytochrome c552 to the A-type oxidase. The sequence is that of Rusticyanin (rus) from Acidithiobacillus ferrooxidans (Thiobacillus ferrooxidans).